Here is a 190-residue protein sequence, read N- to C-terminus: Probable nicotinate-nucleotide adenylyltransferase (190 aa).

Belongs to the NadD family.

It catalyses the reaction nicotinate beta-D-ribonucleotide + ATP + H(+) = deamido-NAD(+) + diphosphate. It functions in the pathway cofactor biosynthesis; NAD(+) biosynthesis; deamido-NAD(+) from nicotinate D-ribonucleotide: step 1/1. Its function is as follows. Catalyzes the reversible adenylation of nicotinate mononucleotide (NaMN) to nicotinic acid adenine dinucleotide (NaAD). This Myxococcus xanthus (strain DK1622) protein is Probable nicotinate-nucleotide adenylyltransferase.